Consider the following 239-residue polypeptide: Ribonuclease PH (239 aa).

Phosphate contacts are provided by residues Arg87 and 125–127; that span reads GTR.

The protein belongs to the RNase PH family. Homohexameric ring arranged as a trimer of dimers.

It carries out the reaction tRNA(n+1) + phosphate = tRNA(n) + a ribonucleoside 5'-diphosphate. Functionally, phosphorolytic 3'-5' exoribonuclease that plays an important role in tRNA 3'-end maturation. Removes nucleotide residues following the 3'-CCA terminus of tRNAs; can also add nucleotides to the ends of RNA molecules by using nucleoside diphosphates as substrates, but this may not be physiologically important. Probably plays a role in initiation of 16S rRNA degradation (leading to ribosome degradation) during starvation. This Syntrophomonas wolfei subsp. wolfei (strain DSM 2245B / Goettingen) protein is Ribonuclease PH.